The sequence spans 669 residues: DNA helicase/primase complex-associated protein (669 aa).

The tract at residues 502-526 (RSTAGTGGEPNPRHITGPDTEGNGE) is disordered.

This sequence belongs to the herpesviridae HEPA family. As to quaternary structure, associates with the primase and the helicase to form the helicase-primase complex. Interacts with the origin-binding protein. Interacts with the polymerase catalytic subunit.

The protein localises to the host nucleus. Its function is as follows. Component of the helicase/primase complex. Unwinds the DNA at the replication forks and generates single-stranded DNA for both leading and lagging strand synthesis. The primase synthesizes short RNA primers on the lagging strand that the polymerase presumably elongates using dNTPs. The primase-associated factor has no known catalytic activity in the complex and may serve to facilitate the formation of the replisome by directly interacting with the origin-binding protein and the polymerase. This Human herpesvirus 8 type P (isolate GK18) (HHV-8) protein is DNA helicase/primase complex-associated protein (ORF40).